Here is a 207-residue protein sequence, read N- to C-terminus: Small ribosomal subunit protein uS4 (207 aa).

A disordered region spans residues 30 to 53; the sequence is DKSKFDTKPGQHGRTSGQRTSDFG. Over residues 42–52 the composition is skewed to polar residues; sequence GRTSGQRTSDF. The S4 RNA-binding domain occupies 97–157; the sequence is SRLDNVVYRM…EKSKKQARIV (61 aa).

The protein belongs to the universal ribosomal protein uS4 family. As to quaternary structure, part of the 30S ribosomal subunit. Contacts protein S5. The interaction surface between S4 and S5 is involved in control of translational fidelity.

In terms of biological role, one of the primary rRNA binding proteins, it binds directly to 16S rRNA where it nucleates assembly of the body of the 30S subunit. With S5 and S12 plays an important role in translational accuracy. The chain is Small ribosomal subunit protein uS4 from Delftia acidovorans (strain DSM 14801 / SPH-1).